The following is a 342-amino-acid chain: Biotin synthase (342 aa).

In terms of domain architecture, Radical SAM core spans Asn36 to Ser260. [4Fe-4S] cluster contacts are provided by Cys51, Cys55, and Cys58. The [2Fe-2S] cluster site is built by Cys95, Cys126, Cys186, and Arg258.

It belongs to the radical SAM superfamily. Biotin synthase family. As to quaternary structure, homodimer. Requires [4Fe-4S] cluster as cofactor. The cofactor is [2Fe-2S] cluster.

It carries out the reaction (4R,5S)-dethiobiotin + (sulfur carrier)-SH + 2 reduced [2Fe-2S]-[ferredoxin] + 2 S-adenosyl-L-methionine = (sulfur carrier)-H + biotin + 2 5'-deoxyadenosine + 2 L-methionine + 2 oxidized [2Fe-2S]-[ferredoxin]. It functions in the pathway cofactor biosynthesis; biotin biosynthesis; biotin from 7,8-diaminononanoate: step 2/2. In terms of biological role, catalyzes the conversion of dethiobiotin (DTB) to biotin by the insertion of a sulfur atom into dethiobiotin via a radical-based mechanism. This chain is Biotin synthase, found in Buchnera aphidicola subsp. Schizaphis graminum (strain Sg).